The chain runs to 139 residues: Protein archease (139 aa).

Positions 12, 138, and 139 each coordinate Ca(2+).

It belongs to the archease family.

Functionally, activates the tRNA-splicing ligase complex by facilitating the enzymatic turnover of catalytic subunit RtcB. Acts by promoting the guanylylation of RtcB, a key intermediate step in tRNA ligation. Can also alter the NTP specificity of RtcB such that ATP, dGTP or ITP is used efficiently. The sequence is that of Protein archease from Saccharolobus islandicus (strain L.S.2.15 / Lassen #1) (Sulfolobus islandicus).